A 284-amino-acid polypeptide reads, in one-letter code: Putative xyloglucan endotransglucosylase/hydrolase protein 13 (284 aa).

The first 24 residues, 1–24 (MAAFTTKQSLLLLSLLLLISLSAG), serve as a signal peptide directing secretion. Residues 25–214 (SFYDNFDITW…WTNAPFSASY (190 aa)) form the GH16 domain. E100 acts as the Nucleophile in catalysis. Residue E104 is the Proton donor of the active site. Xyloglucan is bound at residue E104. N108 is a glycosylation site (N-linked (GlcNAc...) asparagine). Residues 117 to 119 (HTN), 127 to 129 (NRE), 193 to 194 (DW), and G198 contribute to the xyloglucan site. 2 cysteine pairs are disulfide-bonded: C223–C234 and C267–C281. R272 is a xyloglucan binding site.

The protein belongs to the glycosyl hydrolase 16 family. XTH group 2 subfamily. In terms of processing, contains at least one intrachain disulfide bond essential for its enzymatic activity.

It localises to the secreted. The protein resides in the cell wall. Its subcellular location is the extracellular space. The protein localises to the apoplast. The catalysed reaction is breaks a beta-(1-&gt;4) bond in the backbone of a xyloglucan and transfers the xyloglucanyl segment on to O-4 of the non-reducing terminal glucose residue of an acceptor, which can be a xyloglucan or an oligosaccharide of xyloglucan.. In terms of biological role, may catalyze xyloglucan endohydrolysis (XEH) and/or endotransglycosylation (XET). Cleaves and religates xyloglucan polymers, an essential constituent of the primary cell wall, and thereby participates in cell wall construction of growing tissues. This is Putative xyloglucan endotransglucosylase/hydrolase protein 13 (XTH13) from Arabidopsis thaliana (Mouse-ear cress).